Reading from the N-terminus, the 229-residue chain is Small ribosomal subunit protein uS3 (229 aa).

The 69-residue stretch at 39–107 (VRQYLTEKLK…TAQINIAEIR (69 aa)) folds into the KH type-2 domain.

The protein belongs to the universal ribosomal protein uS3 family. As to quaternary structure, part of the 30S ribosomal subunit. Forms a tight complex with proteins S10 and S14.

Its function is as follows. Binds the lower part of the 30S subunit head. Binds mRNA in the 70S ribosome, positioning it for translation. This Shewanella frigidimarina (strain NCIMB 400) protein is Small ribosomal subunit protein uS3.